The sequence spans 540 residues: uncharacterized protein (540 aa).

A chloroplast-targeting transit peptide spans 1-58; it reads MAVSAFRGTRLPLFHHSQFPVARTVSGTSKKMIGARNFKGFVLTAQYSQTQDLFTSRL. One can recognise a Protein kinase domain in the interval 195–533; sequence YVDPTPIASA…ISIASNKRTN (339 aa). ATP contacts are provided by residues 201–209 and lysine 224; that span reads IASASIAQV. Catalysis depends on aspartate 362, which acts as the Proton acceptor.

Belongs to the protein kinase superfamily. ADCK protein kinase family.

The protein resides in the plastid. It is found in the chloroplast. It localises to the plastoglobule. This is an uncharacterized protein from Arabidopsis thaliana (Mouse-ear cress).